We begin with the raw amino-acid sequence, 449 residues long: Naphthalene 1,2-dioxygenase system, large oxygenase component (449 aa).

The Rieske domain maps to 39 to 137; that stretch reads WLFLTHDSLI…LDKKCMGLKE (99 aa). The [2Fe-2S] cluster site is built by Cys81, His83, Cys101, and His104. His208, His213, and Asp362 together coordinate Fe cation.

Belongs to the bacterial ring-hydroxylating dioxygenase alpha subunit family. The naphthalene dioxygenase (NDO) multicomponent enzyme system is composed of an electron transfer component and a dioxygenase component (iron sulfur protein (ISP)). The electron transfer component is composed of a ferredoxin reductase (NdoR) and a ferredoxin (NdoA), and the dioxygenase component is formed of a heterohexamer (trimer of heterodimers) of three large alpha subunits (NdoB) and three small beta subunits (NdoC). The cofactor is [2Fe-2S] cluster. Requires Fe(2+) as cofactor.

The catalysed reaction is naphthalene + NADH + O2 + H(+) = (1R,2S)-1,2-dihydronaphthalene-1,2-diol + NAD(+). It participates in aromatic compound metabolism; naphthalene degradation. Functionally, component of the naphthalene dioxygenase (NDO) multicomponent enzyme system which catalyzes the incorporation of both atoms of molecular oxygen into naphthalene to form cis-(1R,2S)-dihydroxy-1,2-dihydronaphthalene. The alpha subunit has a catalytic role in the holoenzyme. In Pseudomonas aeruginosa, this protein is Naphthalene 1,2-dioxygenase system, large oxygenase component.